A 532-amino-acid chain; its full sequence is uncharacterized protein (532 aa).

6 helical membrane-spanning segments follow: residues 7-26, 30-52, 59-77, 87-109, 116-134, and 139-161; these read HSSY…LGRI, GLSL…GVII, FGLV…PGFF, LILI…KYAF, VVGL…AVAI, and SPLA…ILFV. RCK C-terminal domains lie at 179-262 and 263-346; these read LEIE…LIGE and REEG…LLGN. 6 helical membrane-spanning segments follow: residues 356 to 376, 386 to 408, 421 to 440, 445 to 467, 474 to 496, and 506 to 528; these read FFPI…NISF, LTGG…PIIW, LGLL…NLVA, SGLL…AVIV, INIL…LAAA, and SVAY…QVIS.

Belongs to the AAE transporter (TC 2.A.81) family.

It localises to the cell membrane. This is an uncharacterized protein from Bacteroides thetaiotaomicron (strain ATCC 29148 / DSM 2079 / JCM 5827 / CCUG 10774 / NCTC 10582 / VPI-5482 / E50).